The sequence spans 925 residues: Centrosomal protein of 104 kDa (925 aa).

Positions 209–289 (EVAQIIRKLD…RAEVYEQLEL (81 aa)) form a coiled coil. HEAT repeat units follow at residues 529–567 (TIPV…LQII) and 604–640 (GFTI…YRQH). Residues 677 to 725 (DAEMRARRKAATEEAEKQKKEEIKALQGQLAALKEIQAEVQEKESDAVK) are a coiled coil. Residues 883–925 (PALQPGKSSAVAASGPLGSKAGSKIPTPKGGLSKSSSRTYAKR) are disordered. The segment covering 915–925 (SKSSSRTYAKR) has biased composition (polar residues).

As to quaternary structure, interacts with CCP110 and CEP97. Interacts with ARMC9, TOGARAM1, CCDC66 and CSPP1.

The protein resides in the cell projection. It is found in the cilium. The protein localises to the cytoplasm. Its subcellular location is the cytoskeleton. It localises to the microtubule organizing center. The protein resides in the centrosome. It is found in the centriole. The protein localises to the spindle pole. In terms of biological role, required for ciliogenesis and for structural integrity at the ciliary tip. This chain is Centrosomal protein of 104 kDa (CEP104), found in Homo sapiens (Human).